The primary structure comprises 239 residues: Small ribosomal subunit protein uS3 (239 aa).

One can recognise a KH type-2 domain in the interval 39–109 (IRAMIQEIPE…KVQIKIKEVK (71 aa)). The interval 219–239 (GALLKKQRRPRTEKPAQAGRQ) is disordered.

The protein belongs to the universal ribosomal protein uS3 family. As to quaternary structure, part of the 30S ribosomal subunit. Forms a tight complex with proteins S10 and S14.

In terms of biological role, binds the lower part of the 30S subunit head. Binds mRNA in the 70S ribosome, positioning it for translation. This is Small ribosomal subunit protein uS3 from Treponema denticola (strain ATCC 35405 / DSM 14222 / CIP 103919 / JCM 8153 / KCTC 15104).